Consider the following 405-residue polypeptide: Glucose-1-phosphate adenylyltransferase (405 aa).

Alpha-D-glucose 1-phosphate-binding positions include Tyr96, Gly161, 176–177 (EK), and Ser194.

This sequence belongs to the bacterial/plant glucose-1-phosphate adenylyltransferase family. Homotetramer.

It carries out the reaction alpha-D-glucose 1-phosphate + ATP + H(+) = ADP-alpha-D-glucose + diphosphate. The protein operates within glycan biosynthesis; glycogen biosynthesis. Involved in the biosynthesis of ADP-glucose, a building block required for the elongation reactions to produce glycogen. Catalyzes the reaction between ATP and alpha-D-glucose 1-phosphate (G1P) to produce pyrophosphate and ADP-Glc. The chain is Glucose-1-phosphate adenylyltransferase from Photobacterium profundum (strain SS9).